The chain runs to 139 residues: Nucleoside diphosphate kinase (139 aa).

ATP-binding residues include Lys9, Phe57, Arg85, Thr91, Arg102, and Asn112. Catalysis depends on His115, which acts as the Pros-phosphohistidine intermediate.

This sequence belongs to the NDK family. As to quaternary structure, homotetramer. It depends on Mg(2+) as a cofactor.

The protein localises to the cytoplasm. It carries out the reaction a 2'-deoxyribonucleoside 5'-diphosphate + ATP = a 2'-deoxyribonucleoside 5'-triphosphate + ADP. The catalysed reaction is a ribonucleoside 5'-diphosphate + ATP = a ribonucleoside 5'-triphosphate + ADP. Functionally, major role in the synthesis of nucleoside triphosphates other than ATP. The ATP gamma phosphate is transferred to the NDP beta phosphate via a ping-pong mechanism, using a phosphorylated active-site intermediate. This is Nucleoside diphosphate kinase from Desulfosudis oleivorans (strain DSM 6200 / JCM 39069 / Hxd3) (Desulfococcus oleovorans).